The sequence spans 243 residues: Thaumatin-like protein (243 aa).

A signal peptide spans 1–20 (MASINLFLFAFLLLLSHASA). 8 disulfide bridges follow: C29/C238, C77/C87, C92/C98, C144/C228, C149/C211, C157/C174, C178/C187, and C188/C198.

The protein belongs to the thaumatin family.

This chain is Thaumatin-like protein, found in Arabidopsis thaliana (Mouse-ear cress).